Here is a 249-residue protein sequence, read N- to C-terminus: 2-C-methyl-D-erythritol 4-phosphate cytidylyltransferase (249 aa).

This sequence belongs to the IspD/TarI cytidylyltransferase family. IspD subfamily.

The catalysed reaction is 2-C-methyl-D-erythritol 4-phosphate + CTP + H(+) = 4-CDP-2-C-methyl-D-erythritol + diphosphate. It participates in isoprenoid biosynthesis; isopentenyl diphosphate biosynthesis via DXP pathway; isopentenyl diphosphate from 1-deoxy-D-xylulose 5-phosphate: step 2/6. Catalyzes the formation of 4-diphosphocytidyl-2-C-methyl-D-erythritol from CTP and 2-C-methyl-D-erythritol 4-phosphate (MEP). The polypeptide is 2-C-methyl-D-erythritol 4-phosphate cytidylyltransferase (Thermobifida fusca (strain YX)).